A 128-amino-acid chain; its full sequence is Nanos homolog 1 (128 aa).

The segment at 7 to 23 (FDSWSDYLGLSSLISRG) is essential for its translational repressor activity. A disordered region spans residues 25–52 (QPQREGERPRWDVLSPASAEPLPSNESV). The Nanos-type zinc finger occupies 56–110 (GCGFCRSNREALSLYTSHRLRALDGRVLCPVLRGYTCPLCGANGDWAHTMRYCPL). Positions 57, 60, 73, 84, 92, 95, 103, and 108 each coordinate Zn(2+). Short sequence motifs (C2HC) lie at residues 57–84 (CGFCRSNREALSLYTSHRLRALDGRVLC) and 92–108 (CPLCGANGDWAHTMRYC).

The protein belongs to the nanos family. In terms of assembly, interacts with ccnb1. In terms of tissue distribution, ovary and testis.

The protein resides in the cytoplasm. It is found in the perinuclear region. In terms of biological role, acts as a translational repressor. Can mediate repression affecting different steps in the translation process: cap-driven, IRES-driven, polyadenylated RNAs or nonpolyadenylated RNAs. Essential for the development of primordial germ cells (PGCs) by ensuring their proper migration and survival. The sequence is that of Nanos homolog 1 (nanos1) from Xenopus laevis (African clawed frog).